Here is a 68-residue protein sequence, read N- to C-terminus: Neuronal regeneration-related protein (68 aa).

The disordered stretch occupies residues 42–68 (EETGAASLTPPGSREFTSPATSYLHPF).

Interacts with FLNA. Interacts with the latency-associated peptides (LAP) of TGFB1 and TGFB2; the interaction results in a decrease in TGFB autoinduction. In terms of processing, phosphorylated on Ser-59. Phosphorylation decreases stability and activity. Expressed in brain and fetal lung.

The protein localises to the cytoplasm. May have roles in cellular differentiation. Ectopic expression induces differentiation of fibroblast into myofibroblast and myofibroblast ameboid migration. Increases retinoic-acid regulation of lipid-droplet biogenesis. May also have neural functions. Promotes axonal regeneration and augments motility of gliomas. Down-regulates the expression of TGFB1 and TGFB2 but not of TGFB3. May play a role in the regulation of alveolar generation. This Mus musculus (Mouse) protein is Neuronal regeneration-related protein (Nrep).